A 284-amino-acid chain; its full sequence is L-ribulose-5-phosphate 3-epimerase UlaE (284 aa).

The protein belongs to the L-ribulose-5-phosphate 3-epimerase family.

The catalysed reaction is L-ribulose 5-phosphate = L-xylulose 5-phosphate. The protein operates within cofactor degradation; L-ascorbate degradation; D-xylulose 5-phosphate from L-ascorbate: step 3/4. Its function is as follows. Catalyzes the isomerization of L-xylulose-5-phosphate to L-ribulose-5-phosphate. Is involved in the anaerobic L-ascorbate utilization. This is L-ribulose-5-phosphate 3-epimerase UlaE from Salmonella dublin (strain CT_02021853).